The primary structure comprises 528 residues: Probable GTP-binding protein OBGM, mitochondrial (528 aa).

The N-terminal 45 residues, 1–45 (MWRRQHALLRRISLPKPPAATGIGCYYATEPEGRKPKTAPLQSRG), are a transit peptide targeting the mitochondrion. One can recognise an Obg domain in the interval 46–339 (MVDRFRLRAK…TYLILELKSI (294 aa)). 2 disordered regions span residues 52–87 (LRAKGGDGGNGCISLRRSRSDRQGKPDGGNGGRGGD) and 167–212 (HSPF…NHRG). The segment covering 77 to 86 (PDGGNGGRGG) has biased composition (gly residues). Basic and acidic residues predominate over residues 197–207 (NTAENDCERGN). Residues 340-513 (ADVGLVGMPN…LRVGLRDLMD (174 aa)) form the OBG-type G domain. Residues 346–353 (GMPNAGKS) and 393–397 (DIPGL) each bind GTP.

Belongs to the TRAFAC class OBG-HflX-like GTPase superfamily. OBG GTPase family.

The protein localises to the mitochondrion. Its function is as follows. May bind GTP and have GTPase activity. The polypeptide is Probable GTP-binding protein OBGM, mitochondrial (OBGM) (Oryza sativa subsp. japonica (Rice)).